A 214-amino-acid polypeptide reads, in one-letter code: Cutinase CUT2 (214 aa).

The signal sequence occupies residues 1–18; that stretch reads MQFSLSIATAILAATASA. A disulfide bridge connects residues cysteine 40 and cysteine 117. The active-site Nucleophile is the serine 128. Cysteine 179 and cysteine 186 are joined by a disulfide. Aspartate 183 is an active-site residue. Catalysis depends on histidine 196, which acts as the Proton donor/acceptor.

This sequence belongs to the cutinase family. In terms of processing, the 2 disulfide bonds play a critical role in holding the catalytic residues in juxta-position; reduction of the disulfide bridges results in the complete inactivation of the enzyme.

The protein localises to the secreted. It carries out the reaction cutin + H2O = cutin monomers.. Functionally, catalyzes the hydrolysis of complex carboxylic polyesters found in the cell wall of plants. Degrades cutin, a macromolecule that forms the structure of the plant cuticle. Required for efficient penetration of the host plant cuticle by the appressorium during the initial stage of fungal infection. The sequence is that of Cutinase CUT2 from Pyricularia oryzae (strain 70-15 / ATCC MYA-4617 / FGSC 8958) (Rice blast fungus).